A 612-amino-acid polypeptide reads, in one-letter code: Anaerobic magnesium-protoporphyrin IX monomethyl ester cyclase (612 aa).

The B12-binding domain occupies asparagine 9–glutamate 143. One can recognise a Radical SAM core domain in the interval proline 190 to glutamate 417. Residues cysteine 204, cysteine 208, and cysteine 211 each contribute to the [4Fe-4S] cluster site.

Belongs to the BchE family. Requires [4Fe-4S] cluster as cofactor. Adenosylcob(III)alamin is required as a cofactor.

The catalysed reaction is Mg-protoporphyrin IX 13-monomethyl ester + 3 S-adenosyl-L-methionine + H2O = 3,8-divinyl protochlorophyllide a + 3 5'-deoxyadenosine + 3 L-methionine + 4 H(+). It participates in porphyrin-containing compound metabolism; bacteriochlorophyll biosynthesis (light-independent). Involved in the tetrapyrrole biosynthetic pathways leading to chlorophyll and bacteriochlorophyll (BChl). Catalyzes the anaerobic formation of the isocyclic ring (E-ring) in Mg-protoporphyrin monomethyl ester (MPE) to yield protochlorophyllide a (PChlide a) via a six-electron oxidation and the formation of an oxo group at position C13 using oxygen from a water molecule. The chain is Anaerobic magnesium-protoporphyrin IX monomethyl ester cyclase from Cereibacter sphaeroides (strain ATCC 17023 / DSM 158 / JCM 6121 / CCUG 31486 / LMG 2827 / NBRC 12203 / NCIMB 8253 / ATH 2.4.1.) (Rhodobacter sphaeroides).